Reading from the N-terminus, the 184-residue chain is Photosystem I assembly protein Ycf4 (184 aa).

The next 2 membrane-spanning stretches (helical) occupy residues 22 to 42 (FCWA…GTSS) and 57 to 77 (IVFF…LFIS).

It belongs to the Ycf4 family.

It is found in the plastid. The protein resides in the chloroplast thylakoid membrane. Its function is as follows. Seems to be required for the assembly of the photosystem I complex. This chain is Photosystem I assembly protein Ycf4, found in Lactuca sativa (Garden lettuce).